The following is a 298-amino-acid chain: Troponin T, cardiac muscle (298 aa).

The segment covering 1–70 (MSDIEEVVEE…EAKEAEDGPM (70 aa)) has biased composition (acidic residues). Disordered stretches follow at residues 1–95 (MSDI…GERV) and 120–219 (FENR…EKKK). S2 carries the N-acetylserine modification. S2 is modified (phosphoserine; by CK2). Composition is skewed to basic and acidic residues over residues 120-183 (FENR…DEAR) and 203-219 (QTER…EKKK). At T204 the chain carries Phosphothreonine; by PKC/PRKCA. S208 is subject to Phosphoserine; by PKC/PRKCA. At T213 the chain carries Phosphothreonine; by PKC/PRKCA and RAF1. T294 carries the phosphothreonine; by PKC/PRKCA modification.

It belongs to the troponin T family. Post-translationally, phosphorylation at Thr-213 by PRKCA induces significant reduction in myofilament calcium sensitivity and actomyosin ATPase activity. In terms of tissue distribution, heart. The fetal heart shows a greater expression in the atrium than in the ventricle, while the adult heart shows a greater expression in the ventricle than in the atrium. Isoform 6 predominates in normal adult heart. Isoforms 1, 7 and 8 are expressed in fetal heart. Isoform 7 is also expressed in failing adult heart.

In terms of biological role, troponin T is the tropomyosin-binding subunit of troponin, the thin filament regulatory complex which confers calcium-sensitivity to striated muscle actomyosin ATPase activity. The polypeptide is Troponin T, cardiac muscle (TNNT2) (Homo sapiens (Human)).